The following is a 713-amino-acid chain: Elongation factor G (713 aa).

The region spanning 8–290 (ERYRNFGIMA…GVIQLLPSPV (283 aa)) is the tr-type G domain. GTP-binding positions include 17-24 (AHIDAGKT), 88-92 (DTPGH), and 142-145 (NKMD).

The protein belongs to the TRAFAC class translation factor GTPase superfamily. Classic translation factor GTPase family. EF-G/EF-2 subfamily.

The protein localises to the cytoplasm. In terms of biological role, catalyzes the GTP-dependent ribosomal translocation step during translation elongation. During this step, the ribosome changes from the pre-translocational (PRE) to the post-translocational (POST) state as the newly formed A-site-bound peptidyl-tRNA and P-site-bound deacylated tRNA move to the P and E sites, respectively. Catalyzes the coordinated movement of the two tRNA molecules, the mRNA and conformational changes in the ribosome. This chain is Elongation factor G, found in Stenotrophomonas maltophilia (strain K279a).